A 591-amino-acid polypeptide reads, in one-letter code: Metastasis-associated protein MTA3 (591 aa).

One can recognise a BAH domain in the interval 1-147 (MAANMYRVGD…PSVKTLLADK (147 aa)). Residues 148-258 (GEIRVGPKYQ…SAISVLVPLG (111 aa)) enclose the ELM2 domain. Residues 265-317 (DEMEEWSASEACLFEEALEKYGKDFNDIRQDFLPWKSLTSIIEYYYMWKTTDR) form the SANT domain. The GATA-type; atypical zinc finger occupies 377-404 (CESCYATQSHQWYSWGPPNMQCRLCATC). A disordered region spans residues 417 to 456 (PTQSDEEKSPSPTAEDPRARSHMSRQALQGMPVRNTGSPK). The span at 421–435 (DEEKSPSPTAEDPRA) shows a compositional bias: basic and acidic residues. Serine 425 and serine 427 each carry phosphoserine. Phosphothreonine is present on threonine 452. Position 516 is a phosphoserine (serine 516).

The protein belongs to the metastasis-associated protein family. In terms of assembly, component of the nucleosome remodeling and deacetylase (NuRD) repressor complex, composed of core proteins MTA1, MTA2, MTA3, RBBP4, RBBP7, HDAC1, HDAC2, MBD2, MBD3, and peripherally associated proteins CDK2AP1, CDK2AP2, GATAD2A, GATAD2B, CHD3, CHD4 and CHD5. The exact stoichiometry of the NuRD complex is unknown, and some subunits such as MBD2 and MBD3, GATAD2A and GATAD2B, and CHD3, CHD4 and CHD5 define mutually exclusive NuRD complexes. Interacts with BCL6. Interacts with NACC2. Interacts with PWWP2B. In terms of tissue distribution, expressed in heart, brain, spleen, lung, liver and kidney.

Its subcellular location is the nucleus. It localises to the cytoplasm. Its function is as follows. Acts as a component of the histone deacetylase NuRD complex which participates in the remodeling of chromatin. Plays a role in maintenance of the normal epithelial architecture through the repression of SNAI1 transcription in a histone deacetylase-dependent manner, and thus the regulation of E-cadherin levels. Contributes to transcriptional repression by BCL6. The sequence is that of Metastasis-associated protein MTA3 (Mta3) from Mus musculus (Mouse).